A 329-amino-acid chain; its full sequence is MVQAKTWTLKKHFEGFPTDSNFELRTTELPPLNNGEVLLEALFLSVDPYMRVAAKKLKEGDSMMGEQVARVVESKNSAFPTGTIVVALLGWTSHSISDGNGLRKLPAEWPDKLPLSLALGTVGMPGLTAYFGLLDICGLKGGETVLVNAAAGAVGSVVGQIAKLKGCKVVGTAGSDEKVAYLKKLGFDVAFNYKTVKSLEEALRTASPDGYDCYFDNVGGEFSNTVILQMKTFGRIAICGAISQYNRTGPCPPGPSPEVIIYQQLRMEGFIVTRWQGEVRQKALTDLMNWVSEGKIRYHEYITEGFEKMPAAFMGMLKGDNLGKTIVKA.

T18 carries the post-translational modification Phosphothreonine. S20 is subject to Phosphoserine. Residues 152-155 (GAVG), K178, Y193, N217, 239-245 (CGAISQY), 270-272 (FIV), and N321 contribute to the NADP(+) site. K178 carries the N6-(2-hydroxyisobutyryl)lysine; alternate modification. K178 carries the post-translational modification N6-acetyllysine; alternate.

Belongs to the NADP-dependent oxidoreductase L4BD family. As to quaternary structure, monomer or homodimer.

The protein resides in the cytoplasm. The enzyme catalyses 13,14-dihydro-15-oxo-prostaglandin E1 + NADP(+) = 15-oxoprostaglandin E1 + NADPH + H(+). The catalysed reaction is 13,14-dihydro-15-oxo-prostaglandin E2 + NADP(+) = 15-oxoprostaglandin E2 + NADPH + H(+). It carries out the reaction 13,14-dihydro-15-oxo-prostaglandin F1alpha + NADP(+) = 15-oxoprostaglandin F1alpha + NADPH + H(+). It catalyses the reaction 13,14-dihydro-15-oxo-PGF2alpha + NADP(+) = 15-oxoprostaglandin F2alpha + NADPH + H(+). The enzyme catalyses leukotriene B4 + NADP(+) = 12-oxo-leukotriene B4 + NADPH + H(+). The catalysed reaction is 20-hydroxy-leukotriene B4 + NADP(+) = 12-oxo-20-hydroxy-leukotriene B4 + NADPH + H(+). It carries out the reaction 6-trans-leukotriene B4 + NADP(+) = 12-oxo-(5S)-hydroxy-(6E,8E,10E,14Z)-eicosatetraenoate + NADPH + H(+). It catalyses the reaction (5S,12S)-dihydroxy-(6E,10E,12E,14Z)-eicosatetraenoate + NADP(+) = 12-oxo-(5S)-hydroxy-(6E,8E,10E,14Z)-eicosatetraenoate + NADPH + H(+). The enzyme catalyses an n-alkanal + NADP(+) = an alk-2-enal + NADPH + H(+). The catalysed reaction is hexanal + NADP(+) = (E)-hex-2-enal + NADPH + H(+). It carries out the reaction octanal + NADP(+) = (2E)-octenal + NADPH + H(+). It catalyses the reaction decanal + NADP(+) = (2E)-decenal + NADPH + H(+). The enzyme catalyses dodecanal + NADP(+) = (2E)-dodecenal + NADPH + H(+). The catalysed reaction is 4-hydroxynonanal + NADP(+) = (E)-4-hydroxynon-2-enal + NADPH + H(+). It carries out the reaction pentan-2-one + NADP(+) = (E)-pent-3-en-2-one + NADPH + H(+). It catalyses the reaction nonan-2-one + NADP(+) = (3E)-nonen-2-one + NADPH + H(+). Functionally, NAD(P)H-dependent oxidoreductase involved in metabolic inactivation of pro- and anti-inflammatory eicosanoids: prostaglandins (PG), leukotrienes (LT) and lipoxins (LX). Catalyzes with high efficiency the reduction of the 13,14 double bond of 15-oxoPGs, including 15-oxo-PGE1, 15-oxo-PGE2, 15-oxo-PGF1-alpha and 15-oxo-PGF2-alpha. Catalyzes with lower efficiency the oxidation of the hydroxyl group at C12 of LTB4 and its derivatives, converting them into biologically less active 12-oxo-LTB4 metabolites. Reduces 15-oxo-LXA4 to 13,14 dihydro-15-oxo-LXA4, enhancing neutrophil recruitment at the inflammatory site. Plays a role in metabolic detoxification of alkenals and ketones. Reduces alpha,beta-unsaturated alkenals and ketones, particularly those with medium-chain length, showing highest affinity toward (2E)-decenal and (3E)-3-nonen-2-one. Inactivates 4-hydroxy-2-nonenal, a cytotoxic lipid constituent of oxidized low-density lipoprotein particles. This chain is Prostaglandin reductase 1 (Ptgr1), found in Rattus norvegicus (Rat).